The sequence spans 485 residues: uncharacterized protein (485 aa).

Transmembrane regions (helical) follow at residues 79–99, 117–137, 139–159, 170–190, 199–219, 275–295, 313–333, 355–375, 380–400, 421–441, and 448–468; these read LVTL…LIFA, VFAL…FLVF, FFSG…LADL, VIYF…SGFI, WEFW…FLLL, ILIC…LVLI, GLMY…AMPI, LPMG…FGWT, IFWF…IMTS, GVKI…ESLF, and WGCT…PILF.

This sequence belongs to the major facilitator superfamily. CAR1 family.

Its subcellular location is the membrane. This is an uncharacterized protein from Schizosaccharomyces pombe (strain 972 / ATCC 24843) (Fission yeast).